Reading from the N-terminus, the 153-residue chain is RNA-binding protein 3 (153 aa).

One can recognise an RRM domain in the interval 6–84 (GKLFVGGLNF…RQIRVDHAGK (79 aa)). R47 carries the post-translational modification Omega-N-methylarginine. Residues 81-153 (HAGKSARGSR…GGNYRDNYDN (73 aa)) form a disordered region. Gly residues predominate over residues 89-112 (SRGGAFGGRGRSYSRGGGDQGYGS). Residue R103 is modified to Asymmetric dimethylarginine; alternate. R103 is subject to Dimethylated arginine; alternate. R103 is subject to Omega-N-methylarginine; alternate. Omega-N-methylarginine occurs at positions 118 and 128. Residues S133 and S143 each carry the phosphoserine modification. The residue at position 151 (Y151) is a Phosphotyrosine.

As to quaternary structure, interacts with RPL4. Associates with the 60S ribosomal subunits in an RNA-independent manner. In terms of processing, arg-103 is dimethylated, probably to asymmetric dimethylarginine. Phosphorylated.

It is found in the nucleus. The protein resides in the cytoplasm. It localises to the cell projection. The protein localises to the dendrite. In terms of biological role, cold-inducible mRNA binding protein that enhances global protein synthesis at both physiological and mild hypothermic temperatures. Reduces the relative abundance of microRNAs, when overexpressed. Enhances phosphorylation of translation initiation factors and active polysome formation. The polypeptide is RNA-binding protein 3 (Rbm3) (Mus musculus (Mouse)).